The primary structure comprises 529 residues: Retinoic acid-induced protein 2 (529 aa).

2 disordered regions span residues 1-21 and 400-419; these read MDDL…PTLA and SHSS…HPGS. The segment covering 407–416 has biased composition (polar residues); it reads GTEMVSQPSH.

The sequence is that of Retinoic acid-induced protein 2 (Rai2) from Mus musculus (Mouse).